A 240-amino-acid polypeptide reads, in one-letter code: Uridylate kinase (240 aa).

12-15 (KLSG) serves as a coordination point for ATP. Positions 20–25 (GEQGNG) are involved in allosteric activation by GTP. G54 provides a ligand contact to UMP. ATP contacts are provided by G55 and R59. Residues D74 and 135-142 (TGNPYFST) each bind UMP. The ATP site is built by N163, Y169, and D172.

This sequence belongs to the UMP kinase family. As to quaternary structure, homohexamer.

Its subcellular location is the cytoplasm. The enzyme catalyses UMP + ATP = UDP + ADP. Its pathway is pyrimidine metabolism; CTP biosynthesis via de novo pathway; UDP from UMP (UMPK route): step 1/1. With respect to regulation, allosterically activated by GTP. Inhibited by UTP. Its function is as follows. Catalyzes the reversible phosphorylation of UMP to UDP. The sequence is that of Uridylate kinase from Bacillus velezensis (strain DSM 23117 / BGSC 10A6 / LMG 26770 / FZB42) (Bacillus amyloliquefaciens subsp. plantarum).